The following is a 229-amino-acid chain: Enolase-phosphatase E1 (229 aa).

Over residues 208–218 the composition is skewed to polar residues; it reads DTQSTHRQVSS. A disordered region spans residues 208-229; sequence DTQSTHRQVSSFDDIHPEQIPT. Positions 220–229 are enriched in basic and acidic residues; it reads DDIHPEQIPT.

Belongs to the HAD-like hydrolase superfamily. MasA/MtnC family. As to quaternary structure, monomer. Mg(2+) is required as a cofactor.

The enzyme catalyses 5-methylsulfanyl-2,3-dioxopentyl phosphate + H2O = 1,2-dihydroxy-5-(methylsulfanyl)pent-1-en-3-one + phosphate. The protein operates within amino-acid biosynthesis; L-methionine biosynthesis via salvage pathway; L-methionine from S-methyl-5-thio-alpha-D-ribose 1-phosphate: step 3/6. Its pathway is amino-acid biosynthesis; L-methionine biosynthesis via salvage pathway; L-methionine from S-methyl-5-thio-alpha-D-ribose 1-phosphate: step 4/6. In terms of biological role, bifunctional enzyme that catalyzes the enolization of 2,3-diketo-5-methylthiopentyl-1-phosphate (DK-MTP-1-P) into the intermediate 2-hydroxy-3-keto-5-methylthiopentenyl-1-phosphate (HK-MTPenyl-1-P), which is then dephosphorylated to form the acireductone 1,2-dihydroxy-3-keto-5-methylthiopentene (DHK-MTPene). This chain is Enolase-phosphatase E1, found in Cronobacter sakazakii (strain ATCC BAA-894) (Enterobacter sakazakii).